A 362-amino-acid polypeptide reads, in one-letter code: Peptide chain release factor 1 (362 aa).

Position 238 is an N5-methylglutamine (Gln-238).

This sequence belongs to the prokaryotic/mitochondrial release factor family. Post-translationally, methylated by PrmC. Methylation increases the termination efficiency of RF1.

The protein localises to the cytoplasm. Its function is as follows. Peptide chain release factor 1 directs the termination of translation in response to the peptide chain termination codons UAG and UAA. This chain is Peptide chain release factor 1, found in Psychrobacter cryohalolentis (strain ATCC BAA-1226 / DSM 17306 / VKM B-2378 / K5).